The sequence spans 200 residues: dITP/XTP pyrophosphatase (200 aa).

7-12 lines the substrate pocket; it reads TQNKRK. Mg(2+)-binding residues include Glu-42 and Asp-71. Asp-71 (proton acceptor) is an active-site residue. Residues Ser-72, 156 to 159, Lys-179, and 184 to 185 contribute to the substrate site; these read FGYD and HR.

Belongs to the HAM1 NTPase family. In terms of assembly, homodimer. Requires Mg(2+) as cofactor.

The enzyme catalyses XTP + H2O = XMP + diphosphate + H(+). The catalysed reaction is dITP + H2O = dIMP + diphosphate + H(+). It catalyses the reaction ITP + H2O = IMP + diphosphate + H(+). Its function is as follows. Pyrophosphatase that catalyzes the hydrolysis of nucleoside triphosphates to their monophosphate derivatives, with a high preference for the non-canonical purine nucleotides XTP (xanthosine triphosphate), dITP (deoxyinosine triphosphate) and ITP. Seems to function as a house-cleaning enzyme that removes non-canonical purine nucleotides from the nucleotide pool, thus preventing their incorporation into DNA/RNA and avoiding chromosomal lesions. This Malacoplasma penetrans (strain HF-2) (Mycoplasma penetrans) protein is dITP/XTP pyrophosphatase.